The primary structure comprises 246 residues: Probable transcriptional regulatory protein WD_0484 (246 aa).

Residues 1–22 (MAGHSQFSNIKHRKGAQDAKRS) form a disordered region.

It belongs to the TACO1 family.

It is found in the cytoplasm. The sequence is that of Probable transcriptional regulatory protein WD_0484 from Wolbachia pipientis wMel.